Reading from the N-terminus, the 105-residue chain is Nucleoid-associated protein MXAN_1931 (105 aa).

The protein belongs to the YbaB/EbfC family. In terms of assembly, homodimer.

It localises to the cytoplasm. The protein resides in the nucleoid. In terms of biological role, binds to DNA and alters its conformation. May be involved in regulation of gene expression, nucleoid organization and DNA protection. The chain is Nucleoid-associated protein MXAN_1931 from Myxococcus xanthus (strain DK1622).